Consider the following 415-residue polypeptide: Elongation factor Tu, chloroplastic (415 aa).

Residues 13–217 (KIHLNVGTIG…HLDLYLPTPR (205 aa)) form the tr-type G domain. A G1 region spans residues 22–29 (GHFSHGKT). 22 to 29 (GHFSHGKT) serves as a coordination point for GTP. T29 is a binding site for Mg(2+). A G2 region spans residues 63-67 (NMSIY). The segment at 84–87 (DCPG) is G3. GTP is bound by residues 84 to 88 (DCPGH) and 139 to 142 (NKED). The G4 stretch occupies residues 139–142 (NKED). The tract at residues 177-179 (SAL) is G5.

The protein belongs to the TRAFAC class translation factor GTPase superfamily. Classic translation factor GTPase family. EF-Tu/EF-1A subfamily.

It localises to the plastid. It is found in the chloroplast. The enzyme catalyses GTP + H2O = GDP + phosphate + H(+). In terms of biological role, GTP hydrolase that promotes the GTP-dependent binding of aminoacyl-tRNA to the A-site of ribosomes during protein biosynthesis. The protein is Elongation factor Tu, chloroplastic (tufA) of Coleochaete orbicularis (Charophycean green alga).